The following is a 168-amino-acid chain: Protein-export protein SecB (168 aa).

Belongs to the SecB family. Homotetramer, a dimer of dimers. One homotetramer interacts with 1 SecA dimer.

The protein localises to the cytoplasm. Functionally, one of the proteins required for the normal export of preproteins out of the cell cytoplasm. It is a molecular chaperone that binds to a subset of precursor proteins, maintaining them in a translocation-competent state. It also specifically binds to its receptor SecA. The polypeptide is Protein-export protein SecB (Saccharophagus degradans (strain 2-40 / ATCC 43961 / DSM 17024)).